The following is a 160-amino-acid chain: Major strawberry allergen Fra a 1.07 (160 aa).

It belongs to the BetVI family. In terms of processing, phosphorylated in vivo. Phosphorylation prevents its activity as ribonuclease. As to expression, highly expressed in roots. Expressed a low levels in ripe red fruits.

Possesses ribonuclease activity in vitro. This Fragaria ananassa (Strawberry) protein is Major strawberry allergen Fra a 1.07.